The chain runs to 429 residues: Histidine--tRNA ligase (429 aa).

It belongs to the class-II aminoacyl-tRNA synthetase family. As to quaternary structure, homodimer.

The protein localises to the cytoplasm. It carries out the reaction tRNA(His) + L-histidine + ATP = L-histidyl-tRNA(His) + AMP + diphosphate + H(+). The polypeptide is Histidine--tRNA ligase (Dechloromonas aromatica (strain RCB)).